We begin with the raw amino-acid sequence, 297 residues long: GTPase Era (297 aa).

Residues 7-174 (HSGFVSIIGR…VQVVRDLLPE (168 aa)) enclose the Era-type G domain. Residues 15 to 22 (GRPNVGKS) are G1. Position 15–22 (15–22 (GRPNVGKS)) interacts with GTP. A G2 region spans residues 41–45 (QTTRN). The interval 62–65 (DTPG) is G3. GTP contacts are provided by residues 62–66 (DTPGI) and 124–127 (NKVD). The tract at residues 124-127 (NKVD) is G4. The segment at 153 to 155 (VSA) is G5. Residues 205 to 282 (THDEVPYSVA…FLELFVRVSR (78 aa)) enclose the KH type-2 domain.

Belongs to the TRAFAC class TrmE-Era-EngA-EngB-Septin-like GTPase superfamily. Era GTPase family. In terms of assembly, monomer.

It is found in the cytoplasm. The protein resides in the cell inner membrane. Its function is as follows. An essential GTPase that binds both GDP and GTP, with rapid nucleotide exchange. Plays a role in 16S rRNA processing and 30S ribosomal subunit biogenesis and possibly also in cell cycle regulation and energy metabolism. The chain is GTPase Era from Geotalea daltonii (strain DSM 22248 / JCM 15807 / FRC-32) (Geobacter daltonii).